The chain runs to 393 residues: Acetate kinase (393 aa).

Mg(2+) is bound at residue Asn7. Lys14 is an ATP binding site. Arg87 lines the substrate pocket. Catalysis depends on Asp144, which acts as the Proton donor/acceptor. Residues 202–206, 277–279, and 326–330 contribute to the ATP site; these read HIGNG, DLR, and GVGEN. Glu380 contacts Mg(2+).

This sequence belongs to the acetokinase family. In terms of assembly, homodimer. It depends on Mg(2+) as a cofactor. Mn(2+) is required as a cofactor.

The protein localises to the cytoplasm. The enzyme catalyses acetate + ATP = acetyl phosphate + ADP. It functions in the pathway metabolic intermediate biosynthesis; acetyl-CoA biosynthesis; acetyl-CoA from acetate: step 1/2. Functionally, catalyzes the formation of acetyl phosphate from acetate and ATP. Can also catalyze the reverse reaction. This is Acetate kinase from Mycoplasmopsis pulmonis (strain UAB CTIP) (Mycoplasma pulmonis).